We begin with the raw amino-acid sequence, 79 residues long: Dolichyl-diphosphooligosaccharide--protein glycosyltransferase subunit TMEM258 (79 aa).

An N-acetylmethionine modification is found at Met1. 2 consecutive transmembrane segments (helical) span residues 17-37 and 59-79; these read VFPHLTVVLLAIGMFFTAWFF and VASLFMGFGVLFLLLWVGIYI.

Belongs to the OST5 family. In terms of assembly, component of the oligosaccharyltransferase (OST) complex. OST exists in two different complex forms which contain common core subunits RPN1, RPN2, OST48, OST4, DAD1 and TMEM258, either STT3A or STT3B as catalytic subunits, and form-specific accessory subunits. STT3A complex assembly occurs through the formation of 3 subcomplexes. Subcomplex 1 contains RPN1 and TMEM258, subcomplex 2 contains the STT3A-specific subunits STT3A, DC2/OSTC, and KCP2 as well as the core subunit OST4, and subcomplex 3 contains RPN2, DAD1, and OST48. The STT3A complex can form stable complexes with the Sec61 complex or with both the Sec61 and TRAP complexes.

It localises to the membrane. The protein resides in the endoplasmic reticulum. It is found in the cytoplasm. Its pathway is protein modification; protein glycosylation. Functionally, subunit of the oligosaccharyl transferase (OST) complex that catalyzes the initial transfer of a defined glycan (Glc(3)Man(9)GlcNAc(2) in eukaryotes) from the lipid carrier dolichol-pyrophosphate to an asparagine residue within an Asn-X-Ser/Thr consensus motif in nascent polypeptide chains, the first step in protein N-glycosylation. N-glycosylation occurs cotranslationally and the complex associates with the Sec61 complex at the channel-forming translocon complex that mediates protein translocation across the endoplasmic reticulum (ER). All subunits are required for a maximal enzyme activity. Involved in ER homeostasis in the colonic epithelium. The chain is Dolichyl-diphosphooligosaccharide--protein glycosyltransferase subunit TMEM258 from Bos taurus (Bovine).